Here is a 271-residue protein sequence, read N- to C-terminus: Pyrroline-5-carboxylate reductase (271 aa).

Belongs to the pyrroline-5-carboxylate reductase family.

The protein resides in the cytoplasm. The enzyme catalyses L-proline + NADP(+) = (S)-1-pyrroline-5-carboxylate + NADPH + 2 H(+). The catalysed reaction is L-proline + NAD(+) = (S)-1-pyrroline-5-carboxylate + NADH + 2 H(+). It functions in the pathway amino-acid biosynthesis; L-proline biosynthesis; L-proline from L-glutamate 5-semialdehyde: step 1/1. In terms of biological role, catalyzes the reduction of 1-pyrroline-5-carboxylate (PCA) to L-proline. This chain is Pyrroline-5-carboxylate reductase, found in Staphylococcus aureus (strain Mu50 / ATCC 700699).